A 510-amino-acid polypeptide reads, in one-letter code: NAD(P)H-quinone oxidoreductase subunit 2 A, chloroplastic (510 aa).

14 helical membrane passes run 31–51 (LIFPECILIFGLILLLMIDLT), 57–77 (IPWLYFISSTSLVMSITALLF), 99–119 (IFQFLILLCSTLCIPLSVEYI), 124–144 (MAITEFLLFVLTATLGGMFLC), 149–169 (LITIFVALECFSLCSYLLSGY), 184–204 (LLMGGASSSILVYGFSWLYGL), 229–249 (ISIALIFITVGIGFKLSLAPF), 261–281 (PTPVVAFLSVTSKVAALALAT), 295–315 (WHLLLEILAILSMILGNLIAI), 323–343 (MLAYSSIGQIGYVIIGIIVGD), 354–374 (YMLFYISMNLGTFACIVLFGL), 395–415 (ALSLALCLLSLGGLPPLAGFF), 418–438 (LYLFWCGWQAGLYFLVLIGLL), and 484–504 (MIVCVIASTILGISMNPIIAI).

It belongs to the complex I subunit 2 family. NDH is composed of at least 16 different subunits, 5 of which are encoded in the nucleus.

It is found in the plastid. The protein localises to the chloroplast thylakoid membrane. It carries out the reaction a plastoquinone + NADH + (n+1) H(+)(in) = a plastoquinol + NAD(+) + n H(+)(out). The catalysed reaction is a plastoquinone + NADPH + (n+1) H(+)(in) = a plastoquinol + NADP(+) + n H(+)(out). In terms of biological role, NDH shuttles electrons from NAD(P)H:plastoquinone, via FMN and iron-sulfur (Fe-S) centers, to quinones in the photosynthetic chain and possibly in a chloroplast respiratory chain. The immediate electron acceptor for the enzyme in this species is believed to be plastoquinone. Couples the redox reaction to proton translocation, and thus conserves the redox energy in a proton gradient. In Nicotiana tabacum (Common tobacco), this protein is NAD(P)H-quinone oxidoreductase subunit 2 A, chloroplastic.